The primary structure comprises 436 residues: Adenine nucleotide transporter BT1, chloroplastic/amyloplastic/mitochondrial (436 aa).

The interval 83 to 135 is disordered; the sequence is ASLAPPFPGSRPPGRRGRGSEEEEAEGRRHEEAAAAGRSEPEEGQGQDRQPAP. 3 Solcar repeats span residues 132–216, 227–311, and 324–412; these read QPAP…AKKF, IPIP…LKRL, and VGPV…CKKI. A run of 6 helical transmembrane segments spans residues 137-158, 193-213, 229-247, 290-310, 327-347, and 384-405; these read RLVSGAIAGAVSRTFVAPLETI, AVNVLRVAPSKAIEHFTYDTA, IPTPLVAGALAGFASTLCT, SLIGVVPYAACNFYAYETLKR, VATLLIGSAAGAIASSATFPL, and LYRGLGPSCIKLMPAAGIAFMC. Residues 417 to 428 are compositionally biased toward acidic residues; it reads EDEEEEDEAGGG. The tract at residues 417–436 is disordered; that stretch reads EDEEEEDEAGGGEDDKKKVE.

It belongs to the mitochondrial carrier (TC 2.A.29) family. In terms of tissue distribution, highly expressed in silks and endosperm of developing kernels. Expressed at intermediate levels in tassels and lower levels in stems and leaves.

Its subcellular location is the plastid. The protein localises to the chloroplast inner membrane. It localises to the amyloplast inner membrane. It is found in the mitochondrion inner membrane. Inhibited by mersalyl. Functionally, probable adenylate translocator that mediates transport of ADP-glucose into endosperm storage plastids during starch synthesis. Transports cytosolic ADP-glucose to amyloplast stroma by counter-exchange with ADP. The protein is Adenine nucleotide transporter BT1, chloroplastic/amyloplastic/mitochondrial (BT1) of Zea mays (Maize).